The primary structure comprises 603 residues: Trihelix transcription factor DF1 (603 aa).

The 59-residue stretch at 60 to 118 (NRWPRQETLALLKIRSDMGIAFRDASVKGPLWEEVSRKMAEHGYIRNAKKCKEKFENVY) folds into the Myb-like 1 domain. Disordered stretches follow at residues 149–201 (QSTT…SSIP), 220–249 (LSDN…TRKK), 333–408 (KQPN…SSSR), and 532–603 (QWPP…TNNL). Low complexity-rich tracts occupy residues 168-178 (NNNNNNNNNNN), 189-198 (TTVMPTLPSS), 221-236 (SDNS…TSSD), and 344-362 (PQQV…QQPP). Pro residues predominate over residues 363 to 376 (QRSPPPQPPAPLPQ). Polar residues predominate over residues 381 to 408 (VVSTLDTTKTDNGGDQNMTPAASASSSR). One can recognise a Myb-like 2 domain in the interval 401 to 465 (AASASSSRWP…RCKEKWENIN (65 aa)). Residues 532-555 (QWPPAVTTATTTPAAAQPDQQSQP) are compositionally biased toward low complexity. The segment covering 559-586 (NFDDEEGTDEEYDDEDEEEENEEEEGGE) has biased composition (acidic residues). Positions 593 to 603 (NNNNNKTTNNL) are enriched in low complexity.

The protein resides in the nucleus. Functionally, transcription repressor that negatively regulates root hair growth by directly binding RSL4 promoter and repressing RSL4 expression. Required for the synthesis of seed coat mucilage. This chain is Trihelix transcription factor DF1, found in Arabidopsis thaliana (Mouse-ear cress).